A 311-amino-acid chain; its full sequence is Prohibitin-2 (311 aa).

The helical transmembrane segment at 39 to 57 (GAGMGLAGLVLLGGAAFVA) threads the bilayer. Residues 141–144 (YRTL) carry the AIM motif.

The protein belongs to the prohibitin family. As to quaternary structure, the mitochondrial prohibitin complex consists of two subunits (PHB1 and PHB2). The subunits assemble into a membrane-associated ring-shaped supercomplex of approximately 1 mDa. Interacts with ATG24/SNX4; the interaction is direct and plays a role in mitophagy.

The protein resides in the mitochondrion inner membrane. Its function is as follows. Prohibitin probably acts as a holdase/unfoldase for the stabilization of newly synthesized mitochondrial proteins. Involved in mitophagy. Required for the switch to necrotrophic growth. The polypeptide is Prohibitin-2 (Colletotrichum higginsianum (strain IMI 349063) (Crucifer anthracnose fungus)).